We begin with the raw amino-acid sequence, 155 residues long: uncharacterized protein (155 aa).

Positions 4-65 (IDEIDEVIVR…VVDPSFFGEF (62 aa)) constitute an HTH asnC-type domain. The H-T-H motif DNA-binding region spans 23–42 (LTELGRKVGLTASAVKNRIE).

This is an uncharacterized protein from Pyrococcus horikoshii (strain ATCC 700860 / DSM 12428 / JCM 9974 / NBRC 100139 / OT-3).